Here is a 401-residue protein sequence, read N- to C-terminus: MVGPGLGINQVRRKGVYSTKKGSGDNLLLMKRQGKHDIHDRESDDLSGHDAFSPSKKRGKIDSITEDEIEVKKLSTVATFDKLSRSFPNSEVQAAKNAALRGKEKEEEKVVSIPLIQNLKNEDIESIKCRNNNLLDGKKLLLEAELSAVEDNQIFSSSFPEDKKLSLQSCLSSKEQIIKKLQVREEYMSKFKLPPMLFSDELLTEVEPFMPIVMDILEGKISSAYYFEAKNAFKNSQKAYLSVDEFRKLNLNKFTAGFYGLKRQLRVGEEIAKRYKRALTHNQPATLKWWGITDFCNYVLAPETLTSFCIYQLNLSNKSCSSKTPNKHPKQQLNEKEYYYDPELRMLAYDLLEDTVEYGIIVADSDPIEQWEAAIEEDRLRELKLDVHNYSSRRWRLDTHD.

Ser-23 carries the post-translational modification Phosphoserine. The span at 35–48 shows a compositional bias: basic and acidic residues; that stretch reads KHDIHDRESDDLSG. The tract at residues 35–59 is disordered; that stretch reads KHDIHDRESDDLSGHDAFSPSKKRG.

This sequence belongs to the RTC4 family.

The protein resides in the cytoplasm. The protein localises to the nucleus. Functionally, may be involved in a process influencing telomere capping. The chain is Restriction of telomere capping protein 4 (RTC4) from Saccharomyces cerevisiae (strain YJM789) (Baker's yeast).